The chain runs to 375 residues: tRNA-specific 2-thiouridylase MnmA (375 aa).

Residues 12–19 and methionine 38 each bind ATP; that span reads GMSGGVDS. Residues 98–100 are interaction with target base in tRNA; sequence NPD. Cysteine 103 serves as the catalytic Nucleophile. Residues cysteine 103 and cysteine 200 are joined by a disulfide bond. Position 127 (glycine 127) interacts with ATP. Residues 150–152 are interaction with tRNA; that stretch reads KDQ. Catalysis depends on cysteine 200, which acts as the Cysteine persulfide intermediate. Residues 312–313 form an interaction with tRNA region; the sequence is RY.

The protein belongs to the MnmA/TRMU family.

It localises to the cytoplasm. The catalysed reaction is S-sulfanyl-L-cysteinyl-[protein] + uridine(34) in tRNA + AH2 + ATP = 2-thiouridine(34) in tRNA + L-cysteinyl-[protein] + A + AMP + diphosphate + H(+). Its function is as follows. Catalyzes the 2-thiolation of uridine at the wobble position (U34) of tRNA, leading to the formation of s(2)U34. The protein is tRNA-specific 2-thiouridylase MnmA of Lactobacillus delbrueckii subsp. bulgaricus (strain ATCC BAA-365 / Lb-18).